Reading from the N-terminus, the 528-residue chain is Transcriptional activator protein UGA3 (528 aa).

Residues 17 to 44 constitute a DNA-binding region (zn(2)-C6 fungal-type); it reads CITCKIRKKRCSEDKPVCRDCRRLSFPC. A Nuclear localization signal motif is present at residues 55–62; the sequence is SLKKIKAD.

As to quaternary structure, UGA3 proteins associate in oligomers, at least in the presence of inducer.

The protein resides in the nucleus. Its function is as follows. GABA-dependent positive regulation of genes required for catabolism of GABA (UGA4, UGA1, and UGA2). The chain is Transcriptional activator protein UGA3 (UGA3) from Saccharomyces cerevisiae (strain ATCC 204508 / S288c) (Baker's yeast).